A 908-amino-acid polypeptide reads, in one-letter code: Probable serine/threonine-protein kinase DDB_G0278521 (908 aa).

Residues 1 to 153 (MSNNKIIESL…RGEKLSTLDR (153 aa)) are Extracellular-facing. A helical membrane pass occupies residues 154 to 174 (IICFSIIYSQDQILLFLLNFI). Residues 175–908 (LSNINCNNNN…SDQNDSDLYD (734 aa)) lie on the Cytoplasmic side of the membrane. ANK repeat units lie at residues 258–289 (LKVYPIYFAIVKVIGGGSLVRFLLSILPNVYN), 300–326 (TNRSALFYSTTREMTLLLLQLGCNIHD), 330–361 (KGMLPIHYHSLNGHVDVVKCLIDDSTINALDQ), 362–391 (SNNTPLNLASLSGNLSLAKILLNSGARLSI), and 395–424 (NGRYPIHNACVNGNIDLIRYFLELYSKMNS). Residues 461-472 (NSNNLTNSNSSS) show a composition bias toward low complexity. The interval 461 to 491 (NSNNLTNSNSSSVGGLRISNGGNTQQQSIQI) is disordered. Positions 480-490 (NGGNTQQQSIQ) are enriched in polar residues. The ANK 6 repeat unit spans residues 495–524 (ENNTPIDLLVLNNHFTIAIELLKYEGYIVG). The 288-residue stretch at 530 to 817 (FKTARKIGAG…LPIANIPKFL (288 aa)) folds into the Protein kinase domain. ATP contacts are provided by residues 536 to 544 (IGAGAFGDV) and lysine 557. The Proton acceptor role is filled by aspartate 677.

Belongs to the protein kinase superfamily. TKL Ser/Thr protein kinase family.

It is found in the membrane. The catalysed reaction is L-seryl-[protein] + ATP = O-phospho-L-seryl-[protein] + ADP + H(+). It catalyses the reaction L-threonyl-[protein] + ATP = O-phospho-L-threonyl-[protein] + ADP + H(+). In Dictyostelium discoideum (Social amoeba), this protein is Probable serine/threonine-protein kinase DDB_G0278521.